The primary structure comprises 94 residues: Co-chaperonin GroES (94 aa).

It belongs to the GroES chaperonin family. Heptamer of 7 subunits arranged in a ring. Interacts with the chaperonin GroEL.

The protein resides in the cytoplasm. Functionally, together with the chaperonin GroEL, plays an essential role in assisting protein folding. The GroEL-GroES system forms a nano-cage that allows encapsulation of the non-native substrate proteins and provides a physical environment optimized to promote and accelerate protein folding. GroES binds to the apical surface of the GroEL ring, thereby capping the opening of the GroEL channel. The sequence is that of Co-chaperonin GroES from Listeria monocytogenes serotype 4b (strain CLIP80459).